The chain runs to 309 residues: tRNA dimethylallyltransferase (309 aa).

Residue Gly9–Thr16 coordinates ATP. A substrate-binding site is contributed by Thr11–Thr16. Interaction with substrate tRNA regions lie at residues Asp34–Gln37 and Gln164–Arg168.

Belongs to the IPP transferase family. In terms of assembly, monomer. The cofactor is Mg(2+).

It carries out the reaction adenosine(37) in tRNA + dimethylallyl diphosphate = N(6)-dimethylallyladenosine(37) in tRNA + diphosphate. Catalyzes the transfer of a dimethylallyl group onto the adenine at position 37 in tRNAs that read codons beginning with uridine, leading to the formation of N6-(dimethylallyl)adenosine (i(6)A). The polypeptide is tRNA dimethylallyltransferase (Flavobacterium johnsoniae (strain ATCC 17061 / DSM 2064 / JCM 8514 / BCRC 14874 / CCUG 350202 / NBRC 14942 / NCIMB 11054 / UW101) (Cytophaga johnsonae)).